The following is a 110-amino-acid chain: Large ribosomal subunit protein uL22 (110 aa).

It belongs to the universal ribosomal protein uL22 family. As to quaternary structure, part of the 50S ribosomal subunit.

Its function is as follows. This protein binds specifically to 23S rRNA; its binding is stimulated by other ribosomal proteins, e.g. L4, L17, and L20. It is important during the early stages of 50S assembly. It makes multiple contacts with different domains of the 23S rRNA in the assembled 50S subunit and ribosome. The globular domain of the protein is located near the polypeptide exit tunnel on the outside of the subunit, while an extended beta-hairpin is found that lines the wall of the exit tunnel in the center of the 70S ribosome. The polypeptide is Large ribosomal subunit protein uL22 (Teredinibacter turnerae (strain ATCC 39867 / T7901)).